A 208-amino-acid chain; its full sequence is Ribonuclease HII (208 aa).

Positions 18 to 208 (GFYAGVDEVG…RPVKERLEAC (191 aa)) constitute an RNase H type-2 domain. A divalent metal cation contacts are provided by D24, E25, and D116.

Belongs to the RNase HII family. It depends on Mn(2+) as a cofactor. Mg(2+) serves as cofactor.

It is found in the cytoplasm. It catalyses the reaction Endonucleolytic cleavage to 5'-phosphomonoester.. Endonuclease that specifically degrades the RNA of RNA-DNA hybrids. The sequence is that of Ribonuclease HII from Shewanella loihica (strain ATCC BAA-1088 / PV-4).